A 132-amino-acid chain; its full sequence is MVKNQAQKKGVKRKQVKNIPSGVVHVKATFNNTIVTITDPAGNVISWASAGKVGYSGSRKSSAFAATVAAQDAAKAAMSSGLKEVEVGLKGTGAGRESAVRALISSGLIVSVIRDETPVPHNGCRPRKRRRV.

This sequence belongs to the universal ribosomal protein uS11 family. As to quaternary structure, part of the 30S ribosomal subunit. Interacts with proteins S7 and S18. Binds to IF-3.

Its function is as follows. Located on the platform of the 30S subunit, it bridges several disparate RNA helices of the 16S rRNA. Forms part of the Shine-Dalgarno cleft in the 70S ribosome. The chain is Small ribosomal subunit protein uS11 from Chlamydia trachomatis serovar D (strain ATCC VR-885 / DSM 19411 / UW-3/Cx).